A 281-amino-acid polypeptide reads, in one-letter code: MSKYSDAKELAGLTLGKKTDYANQYDPSLLQPVPRSLNRDDLQLGDELPFMGHDIWTLYELSWLNSKGLPQVAVGEVYIPATSANLIESKSFKLYLNSYNQTRFDSWEEVRQRLITDLSHCAGEAVEVAVNSVTHYTQQPIVTMEGECIDEQDIDISSYDFDDRLLEGAAGEEWVTETLHSHLLKSNCLITNQPDWGSVEIRYQGHKIDREKLLRYLVSFREHNEFHEQCVERIFTDLMKYCQPESLTVFARYTRRGGLDINPYRSTEQAKPDHNHRMARQ.

Residue 87-89 (IES) participates in substrate binding. 89 to 90 (SK) contributes to the NADPH binding site. Catalysis depends on cysteine 188, which acts as the Thioimide intermediate. Residue aspartate 195 is the Proton donor of the active site. 227 to 228 (HE) serves as a coordination point for substrate. Residue 256–257 (RG) coordinates NADPH. A disordered region spans residues 261–281 (INPYRSTEQAKPDHNHRMARQ). Basic and acidic residues predominate over residues 268–281 (EQAKPDHNHRMARQ).

Belongs to the GTP cyclohydrolase I family. QueF type 2 subfamily. Homodimer.

The protein resides in the cytoplasm. The catalysed reaction is 7-aminomethyl-7-carbaguanine + 2 NADP(+) = 7-cyano-7-deazaguanine + 2 NADPH + 3 H(+). The protein operates within tRNA modification; tRNA-queuosine biosynthesis. In terms of biological role, catalyzes the NADPH-dependent reduction of 7-cyano-7-deazaguanine (preQ0) to 7-aminomethyl-7-deazaguanine (preQ1). This Vibrio vulnificus (strain CMCP6) protein is NADPH-dependent 7-cyano-7-deazaguanine reductase.